A 382-amino-acid chain; its full sequence is UDP-4-amino-4-deoxy-L-arabinose--oxoglutarate aminotransferase (382 aa).

Residue Lys-183 is modified to N6-(pyridoxal phosphate)lysine.

The protein belongs to the DegT/DnrJ/EryC1 family. ArnB subfamily. As to quaternary structure, homodimer. Pyridoxal 5'-phosphate serves as cofactor.

The enzyme catalyses UDP-4-amino-4-deoxy-beta-L-arabinose + 2-oxoglutarate = UDP-beta-L-threo-pentopyranos-4-ulose + L-glutamate. The protein operates within nucleotide-sugar biosynthesis; UDP-4-deoxy-4-formamido-beta-L-arabinose biosynthesis; UDP-4-deoxy-4-formamido-beta-L-arabinose from UDP-alpha-D-glucuronate: step 2/3. Its pathway is bacterial outer membrane biogenesis; lipopolysaccharide biosynthesis. In terms of biological role, catalyzes the conversion of UDP-4-keto-arabinose (UDP-Ara4O) to UDP-4-amino-4-deoxy-L-arabinose (UDP-L-Ara4N). The modified arabinose is attached to lipid A and is required for resistance to polymyxin and cationic antimicrobial peptides. The protein is UDP-4-amino-4-deoxy-L-arabinose--oxoglutarate aminotransferase of Pseudomonas fluorescens (strain Pf0-1).